Here is a 335-residue protein sequence, read N- to C-terminus: Nucleoid-associated protein YejK (335 aa).

The protein belongs to the YejK family.

The protein localises to the cytoplasm. Its subcellular location is the nucleoid. The protein is Nucleoid-associated protein YejK of Escherichia coli (strain K12 / MC4100 / BW2952).